Consider the following 1099-residue polypeptide: SLIT-ROBO Rho GTPase-activating protein 3 (1099 aa).

Residues Ala-19–Asp-314 enclose the F-BAR domain. Residues Gln-352–Thr-392 are a coiled coil. The disordered stretch occupies residues Gly-470–Pro-493. In terms of domain architecture, Rho-GAP spans Gly-506–Phe-694. Residues Val-744–Met-803 form the SH3 domain. The span at Asp-809–Ser-820 shows a compositional bias: polar residues. Positions Asp-809 to Gly-846 are disordered. A phosphoserine mark is found at Ser-817, Ser-820, Ser-821, Ser-837, and Ser-858. The disordered stretch occupies residues Ala-861–Lys-911. Residues His-952–Ala-987 are a coiled coil. At Ser-954 the chain carries Phosphoserine. 2 disordered regions span residues Thr-994–His-1014 and Ala-1045–Met-1099. The span at Val-1060–Ser-1074 shows a compositional bias: low complexity. Residues Pro-1089–Met-1099 are compositionally biased toward polar residues.

As to quaternary structure, homodimer. Forms a heterooligomer with SRGAP1 and SRGAP2 through its F-BAR domain. Interacts with WASF1. Probably interacts with ROBO1. Interacts with FASLG.

GTPase-activating protein for RAC1 and perhaps CDC42, but not for RhoA small GTPase. May attenuate RAC1 signaling in neurons. The sequence is that of SLIT-ROBO Rho GTPase-activating protein 3 (Srgap3) from Mus musculus (Mouse).